Consider the following 363-residue polypeptide: Outer membrane porin F (363 aa).

An N-terminal signal peptide occupies residues methionine 1–alanine 22.

It belongs to the Gram-negative porin family. As to quaternary structure, homotrimer. Forms mixed heterotrimers with OmpC and with PhoE; other mixed heterotrimers with other porins are also probable.

The protein localises to the cell outer membrane. Its function is as follows. Forms pores that allow passive diffusion of small molecules across the outer membrane. The protein is Outer membrane porin F of Salmonella typhimurium (strain SL1344).